The following is a 670-amino-acid chain: Solute carrier organic anion transporter family member 1A1 (670 aa).

The Cytoplasmic portion of the chain corresponds to 1–20 (MEETEKKIATQEGRLFSKMK). The helical transmembrane segment at 21 to 40 (VFLLSLTCACLTKSLSGVYM) threads the bilayer. Over 41–59 (NSMLTQIERQFDISTSVAG) the chain is Extracellular. A helical membrane pass occupies residues 60–80 (LINGSFEIGNLFFIVFVSYFG). The Cytoplasmic segment spans residues 81-86 (TKLHRP). A helical membrane pass occupies residues 87 to 111 (VVIGIGCVIMGLGCLLMSLPHFFMG). At 112-155 (RYEYETTISPTGNLSSNSFLCMENRTQTLKPTQDPAECVKEMKS) the chain is on the extracellular side. N-linked (GlcNAc...) asparagine glycosylation is found at Asn-124 and Asn-135. The helical transmembrane segment at 156 to 184 (LMWICVMVGNIIRGIGETPIVPLGISYIE) threads the bilayer. Residues 185–203 (DFAKSENSPLYIGILEMGK) are Cytoplasmic-facing. Residues 204-224 (VAGPIFGLLLGSYCAQIYVDI) traverse the membrane as a helical segment. Over 225 to 242 (GSVNTDDLTITPSDTRWV) the chain is Extracellular. A helical membrane pass occupies residues 243 to 267 (GAWWIGFLVCAGVNILTSIPFFFLP). The Cytoplasmic portion of the chain corresponds to 268 to 311 (KALPKKGQQENVAVTKDGKVEKYGGQAREENLGITKDFLTFMKR). A helical membrane pass occupies residues 312–333 (LFCNPIYMLFILTSVLQVNGFI). Residues 334–353 (NKFTFLPKYLEQQYGKSTAE) are Extracellular-facing. The helical transmembrane segment at 354-377 (AIFLIGVYSLPPICLGYLIGGFIM) threads the bilayer. Topologically, residues 378–381 (KKFK) are cytoplasmic. Residues 382 to 405 (ITVKKAAYLAFCLSVFEYLLFLCH) form a helical membrane-spanning segment. The Extracellular portion of the chain corresponds to 406 to 513 (FMLTCDNAAV…PECANRLQYF (108 aa)). One can recognise a Kazal-like domain in the interval 433–488 (SKVLADCNTRCSCSTNTWDPVCGDNGVAYMSACLAGCKKFVGTGTNMVFQDCSCIQ). 3 cysteine pairs are disulfide-bonded: Cys-439–Cys-469, Cys-445–Cys-465, and Cys-454–Cys-486. Asn-492 is a glycosylation site (N-linked (GlcNAc...) asparagine). The helical transmembrane segment at 514–536 (LILTIIISFIYSLTAIPGYMVFL) threads the bilayer. The Cytoplasmic portion of the chain corresponds to 537-545 (RCVKSEEKS). A helical transmembrane segment spans residues 546–571 (LGVGLHTFCIRVFAGIPAPVYFGALI). Residues 572–605 (DRTCLHWGTLKCGQRGACRMYDINSFRHIYLGLP) lie on the Extracellular side of the membrane. The helical transmembrane segment at 606–623 (IALRGSSYLPAFFILILM) threads the bilayer. Residues 624–670 (RKFQFPGDIDSSATDHTEMMLGEKESEHTDVHGSPQVENDGELKTKL) are Cytoplasmic-facing. A phosphoserine mark is found at Ser-634 and Ser-635. The span at 645–654 (GEKESEHTDV) shows a compositional bias: basic and acidic residues. The tract at residues 645-670 (GEKESEHTDVHGSPQVENDGELKTKL) is disordered.

This sequence belongs to the organo anion transporter (TC 2.A.60) family. As to quaternary structure, binds to PDZK1. Interaction with PDZK1 is required for expression on hepatocyte surface. Post-translationally, glycosylated. As to expression, highly expressed in liver and kidney, and at lower levels in brain, lung, skeletal muscle and proximal colon.

It localises to the basolateral cell membrane. The catalysed reaction is estrone 3-sulfate(out) + hydrogencarbonate(in) = estrone 3-sulfate(in) + hydrogencarbonate(out). It catalyses the reaction taurocholate(out) + hydrogencarbonate(in) = taurocholate(in) + hydrogencarbonate(out). The enzyme catalyses L-thyroxine(out) = L-thyroxine(in). It carries out the reaction prostaglandin E2(out) = prostaglandin E2(in). The catalysed reaction is 17beta-estradiol 17-O-(beta-D-glucuronate)(out) = 17beta-estradiol 17-O-(beta-D-glucuronate)(in). It catalyses the reaction dehydroepiandrosterone 3-sulfate(out) = dehydroepiandrosterone 3-sulfate(in). Functionally, mediates the Na(+)-independent transport of organic anions such as steroid sulfate conjugates (dehydroepiandrosterone sulfate (DHEAS), 17-beta-glucuronosyl estradiol, estrone-3-sulfate), conjugated (taurocholate) and unconjugated (cholate) bile acids, prostaglandin E2 (PGE2) and L-thyroxine T4. Also capable of transporting sulfobromophthalein (BSP), ouabain and gadoxetate. Hydrogencarbonate/HCO3(-) acts as the probable counteranion that exchanges for organic anions. Shows a pH-sensitive substrate specificity which may be ascribed to the protonation state of the binding site and leads to a stimulation of substrate transport in an acidic microenvironment. This Rattus norvegicus (Rat) protein is Solute carrier organic anion transporter family member 1A1.